Consider the following 347-residue polypeptide: tRNA dimethylallyltransferase (347 aa).

Residue 20-27 (GPTASGKT) participates in ATP binding. 22-27 (TASGKT) serves as a coordination point for substrate. 3 interaction with substrate tRNA regions span residues 45-48 (DSAM), 169-173 (QRLMR), and 275-280 (RCVGYR).

The protein belongs to the IPP transferase family. Monomer. It depends on Mg(2+) as a cofactor.

The enzyme catalyses adenosine(37) in tRNA + dimethylallyl diphosphate = N(6)-dimethylallyladenosine(37) in tRNA + diphosphate. Its function is as follows. Catalyzes the transfer of a dimethylallyl group onto the adenine at position 37 in tRNAs that read codons beginning with uridine, leading to the formation of N6-(dimethylallyl)adenosine (i(6)A). The sequence is that of tRNA dimethylallyltransferase from Marinobacter nauticus (strain ATCC 700491 / DSM 11845 / VT8) (Marinobacter aquaeolei).